Here is a 283-residue protein sequence, read N- to C-terminus: MKISFSESQKLFAYFSGLIAALSLFIYYVSAQQSEGALILCITFGVIAAGIWFGPIYALAVTLIVLFVLGTLMMFFQTGQTSLFPAEEGLRMLVVWGIALLLFSFISGRIHDITAELRRSMTRLQSEIKSYVAVDRVTGFDNKQRMKLELSEEIKRAERYGNSFVFLLLHMHYFKEFKSLYGEKETDRLFQYVGQQIRTSVRETDKKFRPSDERIGIVLTHTPAEHMPAVLTKLKKQLDTYQLENGKYVSLTFHVCYLPYRNDIQTADQFLEELENEMMMNEL.

4 helical membrane passes run L11–A31, E35–P55, I56–F76, and L93–I113. Residues N162–L283 form the GGDEF domain.

The protein resides in the cell membrane. This is an uncharacterized protein from Bacillus subtilis (strain 168).